The chain runs to 255 residues: Leucyl/phenylalanyl-tRNA--protein transferase (255 aa).

It belongs to the L/F-transferase family.

The protein localises to the cytoplasm. The enzyme catalyses N-terminal L-lysyl-[protein] + L-leucyl-tRNA(Leu) = N-terminal L-leucyl-L-lysyl-[protein] + tRNA(Leu) + H(+). The catalysed reaction is N-terminal L-arginyl-[protein] + L-leucyl-tRNA(Leu) = N-terminal L-leucyl-L-arginyl-[protein] + tRNA(Leu) + H(+). It catalyses the reaction L-phenylalanyl-tRNA(Phe) + an N-terminal L-alpha-aminoacyl-[protein] = an N-terminal L-phenylalanyl-L-alpha-aminoacyl-[protein] + tRNA(Phe). In terms of biological role, functions in the N-end rule pathway of protein degradation where it conjugates Leu, Phe and, less efficiently, Met from aminoacyl-tRNAs to the N-termini of proteins containing an N-terminal arginine or lysine. The polypeptide is Leucyl/phenylalanyl-tRNA--protein transferase (Burkholderia pseudomallei (strain 668)).